A 591-amino-acid chain; its full sequence is Aspartate--tRNA ligase (591 aa).

Glu-174 contacts L-aspartate. The tract at residues 198-201 (QLFK) is aspartate. Residue Arg-220 coordinates L-aspartate. Residues 220–222 (RDE) and Gln-229 contribute to the ATP site. His-450 is a binding site for L-aspartate. Glu-486 contacts ATP. An L-aspartate-binding site is contributed by Arg-493. An ATP-binding site is contributed by 538-541 (GLDR).

This sequence belongs to the class-II aminoacyl-tRNA synthetase family. Type 1 subfamily. As to quaternary structure, homodimer.

The protein resides in the cytoplasm. It catalyses the reaction tRNA(Asp) + L-aspartate + ATP = L-aspartyl-tRNA(Asp) + AMP + diphosphate. Functionally, catalyzes the attachment of L-aspartate to tRNA(Asp) in a two-step reaction: L-aspartate is first activated by ATP to form Asp-AMP and then transferred to the acceptor end of tRNA(Asp). In Leuconostoc mesenteroides subsp. mesenteroides (strain ATCC 8293 / DSM 20343 / BCRC 11652 / CCM 1803 / JCM 6124 / NCDO 523 / NBRC 100496 / NCIMB 8023 / NCTC 12954 / NRRL B-1118 / 37Y), this protein is Aspartate--tRNA ligase.